The sequence spans 111 residues: Putative G antigen family E member 3 (111 aa).

A disordered region spans residues 1–67 (MSEHVRTRSQ…EGAPAVQGPD (67 aa)). The segment covering 8–24 (RSQSSERGNDQESSQPV) has biased composition (polar residues). At Thr-97 the chain carries Phosphothreonine.

The protein belongs to the GAGE family.

In Homo sapiens (Human), this protein is Putative G antigen family E member 3 (PAGE2B).